A 442-amino-acid polypeptide reads, in one-letter code: Glutamyl-tRNA reductase (442 aa).

Substrate is bound by residues Thr49–Arg52, Ser109, Glu114–Gln116, and Gln120. Residue Cys50 is the Nucleophile of the active site. Gly189–Ser194 contacts NADP(+).

The protein belongs to the glutamyl-tRNA reductase family. As to quaternary structure, homodimer.

It carries out the reaction (S)-4-amino-5-oxopentanoate + tRNA(Glu) + NADP(+) = L-glutamyl-tRNA(Glu) + NADPH + H(+). It participates in porphyrin-containing compound metabolism; protoporphyrin-IX biosynthesis; 5-aminolevulinate from L-glutamyl-tRNA(Glu): step 1/2. Functionally, catalyzes the NADPH-dependent reduction of glutamyl-tRNA(Glu) to glutamate 1-semialdehyde (GSA). This chain is Glutamyl-tRNA reductase, found in Kineococcus radiotolerans (strain ATCC BAA-149 / DSM 14245 / SRS30216).